The primary structure comprises 297 residues: Heterogeneous nuclear ribonucleoprotein D-like (297 aa).

Positions 1 to 21 (MTGFGATPDFNEGSKINASKN) are disordered. RRM domains are found at residues 26 to 108 (GKMF…KGKE) and 111 to 190 (KKVF…QPKE). The disordered stretch occupies residues 192–224 (YRQQQQKQQKGGRGAATGRGGARGRGRGQGWNQ). A compositionally biased stretch (gly residues) spans 202-222 (GGRGAATGRGGARGRGRGQGW).

It localises to the nucleus. Its subcellular location is the cytoplasm. Acts as a transcriptional regulator. Binds DNA and RNA. The sequence is that of Heterogeneous nuclear ribonucleoprotein D-like (hnrnpdl) from Xenopus tropicalis (Western clawed frog).